Consider the following 131-residue polypeptide: Thioredoxin H4-1 (131 aa).

The region spanning 3–129 is the Thioredoxin domain; it reads SCVGKERSDE…LEKKVAALAD (127 aa). Catalysis depends on nucleophile residues Cys55 and Cys58. Cys55 and Cys58 are disulfide-bonded.

It belongs to the thioredoxin family. Plant H-type subfamily.

It is found in the cytoplasm. Functionally, probable thiol-disulfide oxidoreductase that may be involved in the redox regulation of a number of cytosolic enzymes. This chain is Thioredoxin H4-1, found in Oryza sativa subsp. japonica (Rice).